The primary structure comprises 382 residues: Protein phosphatase 1A (382 aa).

Residue glycine 2 is the site of N-myristoyl glycine attachment. Residues 23-291 form the PPM-type phosphatase domain; the sequence is RYGLSSMQGW…DNMSVILICF (269 aa). Mn(2+) contacts are provided by aspartate 60, glycine 61, aspartate 239, and aspartate 282. Phosphoserine is present on residues serine 375 and serine 377.

It belongs to the PP2C family. In terms of assembly, monomer. Interacts with SMAD2; the interaction dephosphorylates SMAD2 in its C-terminal SXS motif resulting in disruption of the SMAD2/SMAD4 complex, SMAD2 nuclear export and termination of the TGF-beta-mediated signaling. Interacts with SMAD2; the interaction dephosphorylates SMAD2 in its C-terminal SXS motif resulting in disruption of the SMAD2/SMAD4 complex, SMAD2 nuclear export and termination of the TGF-beta-mediated signaling. Interacts with the phosphorylated form of IKBKB/IKKB. It depends on Mg(2+) as a cofactor. The cofactor is Mn(2+). N-myristoylation is essential for the recognition of its substrates for dephosphorylation.

It localises to the nucleus. The protein resides in the cytoplasm. It is found in the cytosol. Its subcellular location is the membrane. It carries out the reaction O-phospho-L-seryl-[protein] + H2O = L-seryl-[protein] + phosphate. The catalysed reaction is O-phospho-L-threonyl-[protein] + H2O = L-threonyl-[protein] + phosphate. Its function is as follows. Enzyme with a broad specificity. Negatively regulates TGF-beta signaling through dephosphorylating SMAD2 and SMAD3, resulting in their dissociation from SMAD4, nuclear export of the SMADs and termination of the TGF-beta-mediated signaling. Dephosphorylates PRKAA1 and PRKAA2. Plays an important role in the termination of TNF-alpha-mediated NF-kappa-B activation through dephosphorylating and inactivating IKBKB/IKKB. The sequence is that of Protein phosphatase 1A (PPM1A) from Oryctolagus cuniculus (Rabbit).